A 415-amino-acid polypeptide reads, in one-letter code: Probable glucuronosyltransferase Os03g0287800 (415 aa).

Over 1–25 (MGSSTDHGGAGGRGKKGSGSQLWKK) the chain is Cytoplasmic. The helical; Signal-anchor for type II membrane protein transmembrane segment at 26 to 43 (ALLHSSLCFVMGFFTGFA) threads the bilayer. Residues 44–415 (PSSVSDWTSA…GGRFLSGDFC (372 aa)) are Lumenal-facing. N-linked (GlcNAc...) asparagine glycans are attached at residues Asn78, Asn165, Asn257, and Asn287.

This sequence belongs to the glycosyltransferase 43 family.

The protein resides in the golgi apparatus membrane. Functionally, involved in the synthesis of glucuronoxylan hemicellulose in secondary cell walls. This is Probable glucuronosyltransferase Os03g0287800 from Oryza sativa subsp. japonica (Rice).